Here is a 695-residue protein sequence, read N- to C-terminus: NADPH--cytochrome P450 reductase (695 aa).

Topologically, residues 1 to 8 (MAQLDTLD) are lumenal. Residues 9-31 (IVVLVVLLVGSVAYFTKGSYWAV) form a helical membrane-spanning segment. Residues 32 to 695 (PKDPYAAANS…SGSYQEDVWS (664 aa)) are Cytoplasmic-facing. The Flavodoxin-like domain occupies 66–221 (CVIFYGSQTG…DFLAWKEPMW (156 aa)). FMN contacts are provided by residues 72 to 77 (SQTGTA), 123 to 126 (ATYG), 169 to 178 (LGNNTYEHYN), and Asp-204. The FAD-binding FR-type domain maps to 277–538 (HNPYIAPIVE…HVRHSNFKLP (262 aa)). Arg-296 provides a ligand contact to NADP(+). FAD contacts are provided by residues 451-454 (RYYS), 469-471 (TAV), and 486-489 (GVTT). NADP(+)-binding positions include Thr-552, 614 to 615 (SR), 620 to 624 (KVYVQ), and Glu-656. An FAD-binding site is contributed by Trp-694.

The protein belongs to the NADPH--cytochrome P450 reductase family. It in the N-terminal section; belongs to the flavodoxin family. In the C-terminal section; belongs to the flavoprotein pyridine nucleotide cytochrome reductase family. FAD serves as cofactor. It depends on FMN as a cofactor.

The protein resides in the endoplasmic reticulum membrane. It is found in the mitochondrion outer membrane. The protein localises to the cell membrane. It catalyses the reaction 2 oxidized [cytochrome P450] + NADPH = 2 reduced [cytochrome P450] + NADP(+) + H(+). This enzyme is required for electron transfer from NADP to cytochrome P450 in microsomes. It can also provide electron transfer to heme oxygenase and cytochrome B5. Involved in ergosterol biosynthesis. This is NADPH--cytochrome P450 reductase from Aspergillus fumigatus (strain ATCC MYA-4609 / CBS 101355 / FGSC A1100 / Af293) (Neosartorya fumigata).